The sequence spans 268 residues: Tryptophan synthase alpha chain (268 aa).

Catalysis depends on proton acceptor residues Glu49 and Asp60.

The protein belongs to the TrpA family. In terms of assembly, tetramer of two alpha and two beta chains.

It carries out the reaction (1S,2R)-1-C-(indol-3-yl)glycerol 3-phosphate + L-serine = D-glyceraldehyde 3-phosphate + L-tryptophan + H2O. It participates in amino-acid biosynthesis; L-tryptophan biosynthesis; L-tryptophan from chorismate: step 5/5. Its function is as follows. The alpha subunit is responsible for the aldol cleavage of indoleglycerol phosphate to indole and glyceraldehyde 3-phosphate. This chain is Tryptophan synthase alpha chain, found in Dechloromonas aromatica (strain RCB).